Reading from the N-terminus, the 311-residue chain is Olfactory receptor 4S2 (311 aa).

The Extracellular segment spans residues 1 to 23 (MEKINNVTEFIFWGLSQSPEIEK). N-linked (GlcNAc...) asparagine glycosylation occurs at asparagine 6. The helical transmembrane segment at 24–47 (VCFVVFSFFYIIILLGNLLIMLTV) threads the bilayer. Residues 48 to 55 (CLSNLFKS) lie on the Cytoplasmic side of the membrane. A helical transmembrane segment spans residues 56-77 (PMYFFLSFLSFVDICYSSVTAP). Topologically, residues 78-98 (KMIVDLLAKDKTISYVGCMLQ) are extracellular. A disulfide bond links cysteine 95 and cysteine 187. Residues 99–118 (LFGVHFFGCTEIFILTVMAY) traverse the membrane as a helical segment. At 119–137 (DRYVAICKPLHYMTIMNRE) the chain is on the cytoplasmic side. The helical transmembrane segment at 138–156 (TCNKMLLGTWVGGFLHSII) threads the bilayer. At 157–193 (QVALVVQLPFCGPNEIDHYFCDVHPVLKLACTETYIV) the chain is on the extracellular side. Residues 194–217 (GVVVTANSGTIALGSFVILLISYS) traverse the membrane as a helical segment. The Cytoplasmic segment spans residues 218–233 (IILVSLRKQSAEGRRK). Residues 234–256 (ALSTCGSHIAMVVIFFGPCTFMY) form a helical membrane-spanning segment. Residues 257 to 267 (MRPDTTFSEDK) are Extracellular-facing. The helical transmembrane segment at 268–287 (MVAVFYTIITPMLNPLIYTL) threads the bilayer. Residues 288-311 (RNAEVKNAMKKLWGRNVFLEAKGK) lie on the Cytoplasmic side of the membrane.

The protein belongs to the G-protein coupled receptor 1 family.

The protein localises to the cell membrane. In terms of biological role, odorant receptor. In Homo sapiens (Human), this protein is Olfactory receptor 4S2 (OR4S2).